The chain runs to 78 residues: Small integral membrane protein 5 (78 aa).

The chain crosses the membrane as a helical span at residues 32–52 (ILAFSVLVVFTATVVLLLLIA).

It localises to the membrane. In Bos taurus (Bovine), this protein is Small integral membrane protein 5 (SMIM5).